The sequence spans 444 residues: Pineal opsin (444 aa).

Residues 1-20 (MDALQESPPSHHSLPSALPS) are disordered. The Extracellular portion of the chain corresponds to 1 to 46 (MDALQESPPSHHSLPSALPSATGGNGTVATMHNPFERPLEGIAPWN). Residues 7–20 (SPPSHHSLPSALPS) are compositionally biased toward low complexity. An N-linked (GlcNAc...) asparagine glycan is attached at N25. The helical transmembrane segment at 47 to 71 (FTMLAALMGTITALSLGENFAVIVV) threads the bilayer. The Cytoplasmic segment spans residues 72 to 83 (TARFRQLRQPLN). A helical membrane pass occupies residues 84 to 108 (YVLVNLAAADLLVSAIGGSVSFFTN). The Extracellular segment spans residues 109-123 (IKGYFFLGVHACVLE). C120 and C197 are joined by a disulfide. A helical transmembrane segment spans residues 124 to 143 (GFAVTYFGVVALWSLALLAF). Residues 144–162 (ERYFVICRPLGNFRLQSKH) are Cytoplasmic-facing. The helical transmembrane segment at 163–186 (AVLGLAVVWVFSLACTLPPVLGWS) threads the bilayer. Topologically, residues 187 to 210 (SYRPSMIGTTCEPNWYSGELHDHT) are extracellular. The chain crosses the membrane as a helical span at residues 211–238 (FILMFFSTCFIFPLAVIFFSYGKLIQKL). The Cytoplasmic portion of the chain corresponds to 239 to 260 (KKASETQRGLESTRRAEQQVTR). The helical transmembrane segment at 261–284 (MVVVMILAFLVCWMPYATFSIVVT) threads the bilayer. Residues 285–292 (ACPTIHLD) are Extracellular-facing. A helical transmembrane segment spans residues 293–317 (PLLAAVPAFFSKTATVYNPVIYIFM). K304 carries the N6-(retinylidene)lysine modification. Topologically, residues 318–444 (NKQFRDCFVQ…SESVSKICPV (127 aa)) are cytoplasmic. A lipid anchor (S-palmitoyl cysteine) is attached at C331. 2 disordered regions span residues 341 to 360 (QTAGAQDTEHTASVNTQSPG) and 388 to 420 (EPTMSAAGSMGAPPNKSTAPCQQQGQQQQQQGT). Residues 409 to 419 (QQQGQQQQQQG) show a composition bias toward low complexity.

It belongs to the G-protein coupled receptor 1 family. Opsin subfamily. Phosphorylated on some or all of the serine and threonine residues present in the C-terminal region. In terms of tissue distribution, pineal gland.

The protein localises to the membrane. The sequence is that of Pineal opsin from Petromyzon marinus (Sea lamprey).